We begin with the raw amino-acid sequence, 1233 residues long: DNA-directed RNA polymerase subunit beta' (1233 aa).

Positions 61, 63, 76, and 79 each coordinate Zn(2+). The Mg(2+) site is built by D455, D457, and D459. The Zn(2+) site is built by C824, C898, C905, and C908. Over residues 1211–1220 (ELQKAFDKEP) the composition is skewed to basic and acidic residues. The segment at 1211 to 1233 (ELQKAFDKEPASSTGNKASNSAK) is disordered. The segment covering 1221–1233 (ASSTGNKASNSAK) has biased composition (polar residues).

This sequence belongs to the RNA polymerase beta' chain family. The RNAP catalytic core consists of 2 alpha, 1 beta, 1 beta' and 1 omega subunit. When a sigma factor is associated with the core the holoenzyme is formed, which can initiate transcription. Mg(2+) is required as a cofactor. It depends on Zn(2+) as a cofactor.

It carries out the reaction RNA(n) + a ribonucleoside 5'-triphosphate = RNA(n+1) + diphosphate. Its function is as follows. DNA-dependent RNA polymerase catalyzes the transcription of DNA into RNA using the four ribonucleoside triphosphates as substrates. The protein is DNA-directed RNA polymerase subunit beta' of Oenococcus oeni (strain ATCC BAA-331 / PSU-1).